The following is a 247-amino-acid chain: Cytochrome c oxidase subunit 2 (247 aa).

At 1–38 the chain is on the mitochondrial intermembrane side; it reads MREMMMNNMLNDVPTPWAMYFQDSATPNMEGMMELHNN. The chain crosses the membrane as a helical span at residues 39–55; the sequence is VLFYLCVMLGFVTYMLY. The Mitochondrial matrix segment spans residues 56-86; it reads NVMTVYNKSAMAYKYMNHGQFMEMMWTTFPA. A helical membrane pass occupies residues 87–103; it reads MMLLMMAFPSFMLLYMC. The Mitochondrial intermembrane portion of the chain corresponds to 104-247; the sequence is DEVMAPAMTI…VDFLAWIDEQ (144 aa). Cu cation contacts are provided by H182, C217, E219, C221, H225, and M228. A Mg(2+)-binding site is contributed by E219.

It belongs to the cytochrome c oxidase subunit 2 family. In terms of assembly, component of the cytochrome c oxidase (complex IV, CIV), a multisubunit enzyme composed of a catalytic core of 3 subunits and several supernumerary subunits. The complex exists as a monomer or a dimer and forms supercomplexes (SCs) in the inner mitochondrial membrane with ubiquinol-cytochrome c oxidoreductase (cytochrome b-c1 complex, complex III, CIII). It depends on Cu cation as a cofactor.

The protein resides in the mitochondrion inner membrane. The catalysed reaction is 4 Fe(II)-[cytochrome c] + O2 + 8 H(+)(in) = 4 Fe(III)-[cytochrome c] + 2 H2O + 4 H(+)(out). Functionally, component of the cytochrome c oxidase, the last enzyme in the mitochondrial electron transport chain which drives oxidative phosphorylation. The respiratory chain contains 3 multisubunit complexes succinate dehydrogenase (complex II, CII), ubiquinol-cytochrome c oxidoreductase (cytochrome b-c1 complex, complex III, CIII) and cytochrome c oxidase (complex IV, CIV), that cooperate to transfer electrons derived from NADH and succinate to molecular oxygen, creating an electrochemical gradient over the inner membrane that drives transmembrane transport and the ATP synthase. Cytochrome c oxidase is the component of the respiratory chain that catalyzes the reduction of oxygen to water. Electrons originating from reduced cytochrome c in the intermembrane space (IMS) are transferred via the dinuclear copper A center (CU(A)) of subunit 2 and heme A of subunit 1 to the active site in subunit 1, a binuclear center (BNC) formed by heme A3 and copper B (CU(B)). The BNC reduces molecular oxygen to 2 water molecules using 4 electrons from cytochrome c in the IMS and 4 protons from the mitochondrial matrix. In Eeniella nana (Yeast), this protein is Cytochrome c oxidase subunit 2 (COX2).